Here is a 160-residue protein sequence, read N- to C-terminus: Transcriptional repressor NrdR (160 aa).

The segment at 3–34 is a zinc-finger region; sequence CPYCQYEDTQVKDSRPVEEGAVIRRRRVCPVC. In terms of domain architecture, ATP-cone spans 49 to 139; the sequence is LLVSKKSGRC…VYRDFRNASD (91 aa).

Belongs to the NrdR family. Zn(2+) is required as a cofactor.

Functionally, negatively regulates transcription of bacterial ribonucleotide reductase nrd genes and operons by binding to NrdR-boxes. This Bartonella quintana (strain Toulouse) (Rochalimaea quintana) protein is Transcriptional repressor NrdR.